A 695-amino-acid chain; its full sequence is IQ domain-containing protein E (695 aa).

A disordered region spans residues 29–55; sequence KAKRKAFHKPPPTSPKSPYLSKPRKVA. Coiled coils occupy residues 157-264, 292-358, and 387-477; these read LHVQ…RLQT, SALL…SSKS, and NKDH…CPEV. S322 is modified (phosphoserine). Disordered stretches follow at residues 357 to 390, 465 to 521, 564 to 599, and 618 to 695; these read KSHA…NKDH, EMKK…RRDA, ASKA…TGSP, and RARH…NFPV. Residues 465-482 show a composition bias toward basic and acidic residues; that stretch reads EMKKEEKEDCPEVPHKAQ. IQ domains follow at residues 542-571 and 601-630; these read LDEA…HGSE and QEEA…RTTT.

In terms of assembly, component of the EvC complex composed of EFCAB7, IQCE, EVC2 and EVC; built from two subcomplexes, EVC2:EVC and EFCAB7:IQCE. Interacts (via N-terminus) with EFCAB7 (via EF-hands 1 and 2); this interaction anchors the EVC-EVC2 complex in a signaling microdomain at the base of cilia and stimulates the Hedgehog (Hh) pathway. Interacts with EVC2 (via N-terminal end). Interacts with EVC.

It localises to the cell projection. Its subcellular location is the cilium membrane. Its function is as follows. Component of the EvC complex that positively regulates ciliary Hedgehog (Hh) signaling. Required for proper limb morphogenesis. The protein is IQ domain-containing protein E (IQCE) of Homo sapiens (Human).